A 367-amino-acid chain; its full sequence is Sulfate/thiosulfate import ATP-binding protein CysA 2 (367 aa).

In terms of domain architecture, ABC transporter spans 3-237; sequence VRVQNIRKEF…PVSPFVYGFI (235 aa). 35–42 serves as a coordination point for ATP; that stretch reads GPSGSGKT.

It belongs to the ABC transporter superfamily. Sulfate/tungstate importer (TC 3.A.1.6) family. As to quaternary structure, the complex is composed of two ATP-binding proteins (CysA), two transmembrane proteins (CysT and CysW) and a solute-binding protein (CysP).

It localises to the cell inner membrane. The catalysed reaction is sulfate(out) + ATP + H2O = sulfate(in) + ADP + phosphate + H(+). The enzyme catalyses thiosulfate(out) + ATP + H2O = thiosulfate(in) + ADP + phosphate + H(+). Its function is as follows. Part of the ABC transporter complex CysAWTP involved in sulfate/thiosulfate import. Responsible for energy coupling to the transport system. The protein is Sulfate/thiosulfate import ATP-binding protein CysA 2 of Rhizobium meliloti (strain 1021) (Ensifer meliloti).